Here is a 348-residue protein sequence, read N- to C-terminus: Rhodopsin (348 aa).

The Extracellular segment spans residues 1–33 (TEGPYFYVPMVNTTGIVRSPYEYPQYYLVNPAA). Asn-12 carries an N-linked (GlcNAc...) asparagine glycan. A helical transmembrane segment spans residues 34-58 (FAILGAYMFFLIIVGFPVNFMTLYV). At 59-70 (TLEHKKLRTPLN) the chain is on the cytoplasmic side. A helical transmembrane segment spans residues 71 to 93 (YILLNLAVADLFMVIGGFTTTMY). The Extracellular portion of the chain corresponds to 94–107 (TSMHGYFVLGRLGC). The cysteines at positions 107 and 184 are disulfide-linked. A helical membrane pass occupies residues 108–130 (NLEGFFATLGGMISLWSLAVLAI). Positions 131 to 133 (ERW) match the 'Ionic lock' involved in activated form stabilization motif. Over 131–149 (ERWVVVCKPISNFRFGENH) the chain is Cytoplasmic. The chain crosses the membrane as a helical span at residues 150–170 (AIMGVSLTWGMALACTVPPLV). Residues 171–199 (GWSRYIPEGMQCSCGIDYYTRAEGFNNET) are Extracellular-facing. An N-linked (GlcNAc...) asparagine glycan is attached at Asn-197. A helical transmembrane segment spans residues 200–221 (FVLYMFCCHFTVPLTIIFFCYG). The Cytoplasmic portion of the chain corresponds to 222–249 (RLLCAVKEAAAAQQESETTQRAEREVTR). A helical membrane pass occupies residues 250-271 (MVVIMVIGFLVCWLPYASVAWF). At 272–283 (VFTHQGSEFGPL) the chain is on the extracellular side. Residues 284-305 (FMTIPAFFAKSSAIYNPMIYIC) form a helical membrane-spanning segment. At Lys-293 the chain carries N6-(retinylidene)lysine. The Cytoplasmic portion of the chain corresponds to 306-348 (MNKQFRHCMITTLFCGKNPFEGEEEGASSTKTEASSASSVSPA). Cys-320 carries S-palmitoyl cysteine lipidation. The segment at 327 to 348 (GEEEGASSTKTEASSASSVSPA) is disordered. Over residues 332 to 348 (ASSTKTEASSASSVSPA) the composition is skewed to low complexity.

This sequence belongs to the G-protein coupled receptor 1 family. Opsin subfamily. Phosphorylated on some or all of the serine and threonine residues present in the C-terminal region. Post-translationally, contains one covalently linked retinal chromophore.

It is found in the membrane. The protein localises to the cell projection. The protein resides in the cilium. It localises to the photoreceptor outer segment. Functionally, photoreceptor required for image-forming vision at low light intensity. While most salt water fish species use retinal as chromophore, most freshwater fish use 3-dehydroretinal, or a mixture of retinal and 3-dehydroretinal. Light-induced isomerization of 11-cis to all-trans retinal triggers a conformational change that activates signaling via G-proteins. Subsequent receptor phosphorylation mediates displacement of the bound G-protein alpha subunit by arrestin and terminates signaling. This chain is Rhodopsin (rho), found in Sargocentron xantherythrum (Hawaiian squirrelfish).